We begin with the raw amino-acid sequence, 282 residues long: Undecaprenyl-diphosphatase (282 aa).

Transmembrane regions (helical) follow at residues 40-60 (GAAF…IYFY), 87-107 (MGWM…LFKT), 116-136 (LYWI…AEWL), 153-173 (IGWK…IPGS), 196-216 (FSFL…LYET), 229-249 (NLAV…AFLI), and 256-276 (STAL…GLIA).

It belongs to the UppP family.

It localises to the cell inner membrane. It catalyses the reaction di-trans,octa-cis-undecaprenyl diphosphate + H2O = di-trans,octa-cis-undecaprenyl phosphate + phosphate + H(+). Catalyzes the dephosphorylation of undecaprenyl diphosphate (UPP). Confers resistance to bacitracin. The chain is Undecaprenyl-diphosphatase from Chlorobium phaeobacteroides (strain BS1).